A 238-amino-acid chain; its full sequence is Lactate utilization protein A (238 aa).

The protein belongs to the LutA/YkgE family.

Functionally, is involved in L-lactate degradation and allows cells to grow with lactate as the sole carbon source. This chain is Lactate utilization protein A, found in Geobacillus sp. (strain WCH70).